Reading from the N-terminus, the 293-residue chain is Protein orai (293 aa).

Over 1 to 122 (MPRSHDPSRV…RAQLKASSRT (122 aa)) the chain is Cytoplasmic. Residues 62-81 (STAGGGSRNGVGSKEGSVTS) form a disordered region. Residues 123 to 141 (SALLAGFAMVCLVELQYDQ) traverse the membrane as a helical segment. Over 142–146 (STPKP) the chain is Extracellular. A helical transmembrane segment spans residues 147 to 167 (LLIVLGVVTSLLVSVHLLALM). The Cytoplasmic segment spans residues 168 to 198 (MSTCILPYMEATGCTQDSPHIKLKFYIDLSW). The helical transmembrane segment at 199 to 219 (LFSTCIGLLLFLVEIGVIFYV) threads the bilayer. The Extracellular segment spans residues 220–230 (KFTAVGYPTAG). A helical transmembrane segment spans residues 231 to 251 (YITTAMLVPVGVVFVVFSYLI). The Cytoplasmic portion of the chain corresponds to 252–293 (HKNRVSHSLGRFKHKVDTMKQFLDVEANLQKSTLAPSTIRDI).

Belongs to the Orai family. As to expression, expressed in gonad sheath cells, hypodermis, intestine and spermatheca. Coexpressed with stim-1.

It localises to the membrane. Its function is as follows. Ca(2+) release-activated Ca(2+)-like (CRAC-like) channel subunit which mediates Ca(2+) influx and increase in Ca(2+)-selective current by synergy with the Ca(2+) sensor, stim-1. Required for Ca(2+) and IP3-dependent contractile activity of sheath cells and the spermatheca. Affects brood size and somatic cell function. This Caenorhabditis elegans protein is Protein orai (orai-1).